We begin with the raw amino-acid sequence, 232 residues long: uncharacterized protein (232 aa).

The first 18 residues, 1–18 (MGILKSLFTLGKSFISQA), serve as a signal peptide directing secretion. Residues 207–232 (AEAGIGGSNKSSAQDVLARLQRQQGE) are disordered.

This sequence belongs to the PspA/Vipp/IM30 family.

This is an uncharacterized protein from Escherichia coli O6:H1 (strain CFT073 / ATCC 700928 / UPEC).